Reading from the N-terminus, the 69-residue chain is Protein SlyX homolog (69 aa).

The protein belongs to the SlyX family.

This chain is Protein SlyX homolog, found in Pseudomonas aeruginosa (strain LESB58).